The chain runs to 154 residues: Myoglobin (154 aa).

Residues 2 to 148 (GLSDQEWQQV…FRNDMASKYK (147 aa)) enclose the Globin domain. Histidine 65 is a binding site for nitrite. Histidine 65 provides a ligand contact to O2. Histidine 94 is a binding site for heme b.

The protein belongs to the globin family. Monomeric.

The protein localises to the cytoplasm. Its subcellular location is the sarcoplasm. The enzyme catalyses Fe(III)-heme b-[protein] + nitric oxide + H2O = Fe(II)-heme b-[protein] + nitrite + 2 H(+). It carries out the reaction H2O2 + AH2 = A + 2 H2O. In terms of biological role, monomeric heme protein which primary function is to store oxygen and facilitate its diffusion within muscle tissues. Reversibly binds oxygen through a pentacoordinated heme iron and enables its timely and efficient release as needed during periods of heightened demand. Depending on the oxidative conditions of tissues and cells, and in addition to its ability to bind oxygen, it also has a nitrite reductase activity whereby it regulates the production of bioactive nitric oxide. Under stress conditions, like hypoxia and anoxia, it also protects cells against reactive oxygen species thanks to its pseudoperoxidase activity. The protein is Myoglobin (MB) of Cerorhinca monocerata (Rhinoceros auklet).